Here is a 225-residue protein sequence, read N- to C-terminus: NAD(P)H-quinone oxidoreductase subunit K, chloroplastic (225 aa).

Positions 43, 44, 108, and 139 each coordinate [4Fe-4S] cluster.

Belongs to the complex I 20 kDa subunit family. In terms of assembly, NDH is composed of at least 16 different subunits, 5 of which are encoded in the nucleus. The cofactor is [4Fe-4S] cluster.

It localises to the plastid. The protein resides in the chloroplast thylakoid membrane. It catalyses the reaction a plastoquinone + NADH + (n+1) H(+)(in) = a plastoquinol + NAD(+) + n H(+)(out). The catalysed reaction is a plastoquinone + NADPH + (n+1) H(+)(in) = a plastoquinol + NADP(+) + n H(+)(out). In terms of biological role, NDH shuttles electrons from NAD(P)H:plastoquinone, via FMN and iron-sulfur (Fe-S) centers, to quinones in the photosynthetic chain and possibly in a chloroplast respiratory chain. The immediate electron acceptor for the enzyme in this species is believed to be plastoquinone. Couples the redox reaction to proton translocation, and thus conserves the redox energy in a proton gradient. In Liriodendron tulipifera (Tuliptree), this protein is NAD(P)H-quinone oxidoreductase subunit K, chloroplastic.